The primary structure comprises 465 residues: Chromosomal replication initiator protein DnaA (465 aa).

Positions 1 to 87 are domain I, interacts with DnaA modulators; sequence MLWTDCLTRL…RPGSILSSSE (87 aa). Residues 81–123 form a disordered region; it reads SILSSSEQPATTTAALQTAPIPQPAKGKREPEPVANTAVSSKS. Over residues 88–100 the composition is skewed to low complexity; the sequence is QPATTTAALQTAP. The domain II stretch occupies residues 88-127; that stretch reads QPATTTAALQTAPIPQPAKGKREPEPVANTAVSSKSSKKK. The tract at residues 128-345 is domain III, AAA+ region; sequence LLNPQFTFSL…GALNKVVAIS (218 aa). Gly173, Gly175, Lys176, and Thr177 together coordinate ATP. Residues 346-465 are domain IV, binds dsDNA; that stretch reads RFKGAPIDLD…YKNLLRLLQS (120 aa).

Belongs to the DnaA family. In terms of assembly, oligomerizes as a right-handed, spiral filament on DNA at oriC.

It localises to the cytoplasm. In terms of biological role, plays an essential role in the initiation and regulation of chromosomal replication. ATP-DnaA binds to the origin of replication (oriC) to initiate formation of the DNA replication initiation complex once per cell cycle. Binds the DnaA box (a 9 base pair repeat at the origin) and separates the double-stranded (ds)DNA. Forms a right-handed helical filament on oriC DNA; dsDNA binds to the exterior of the filament while single-stranded (ss)DNA is stabiized in the filament's interior. The ATP-DnaA-oriC complex binds and stabilizes one strand of the AT-rich DNA unwinding element (DUE), permitting loading of DNA polymerase. After initiation quickly degrades to an ADP-DnaA complex that is not apt for DNA replication. Binds acidic phospholipids. This chain is Chromosomal replication initiator protein DnaA, found in Acinetobacter baumannii (strain SDF).